Consider the following 329-residue polypeptide: Protein phosphatase 1 regulatory subunit 42 (329 aa).

LRR repeat units lie at residues 30-51 (KLTH…SVCR), 52-73 (NLTV…GFAS), 74-95 (NLTH…SSLH), 96-117 (KLSK…EELK), 118-139 (SLKE…AFDP), 148-169 (TLCI…APLR), and 170-191 (KMTH…ETVF). Residues 205–243 (NPVCHKPKYRDRLITVCKFLDDLDGKQINELSRQFLINW) enclose the LRRCT domain. A disordered region spans residues 268-329 (STSADFHLGP…SSTEWQSLKI (62 aa)). Over residues 318 to 329 (GDSSTEWQSLKI) the composition is skewed to polar residues.

The protein resides in the cytoplasm. It is found in the cytoskeleton. Its subcellular location is the microtubule organizing center. It localises to the centrosome. Its function is as follows. May regulate phosphatase activity of protein phosphatase 1 (PP1) complexes. The chain is Protein phosphatase 1 regulatory subunit 42 (ppp1r42) from Danio rerio (Zebrafish).